A 383-amino-acid chain; its full sequence is Cysteine protease StiP (383 aa).

It belongs to the cysteine protease StiP family. Post-translationally, is probably processed via an autocatalytic removal of a proregion of about 100 amino acids.

Is inhibited by bromopyruvate in vitro. Activity is not affected by the presence of tellurite. Functionally, cysteine protease that may play a role in regulating cell morphology in response to stressful conditions which likely cause oxidative damage. Appears to catalyze its own cleavage, which probably leads to its activation. This Acinetobacter baylyi (strain ATCC 33305 / BD413 / ADP1) protein is Cysteine protease StiP (stiP).